A 167-amino-acid polypeptide reads, in one-letter code: MVSALREAPLIRVHSSPVSSPSVSGSRRPVSCLSSQSSALSQSGGGSTSAAGIEARSRALRRRWCPAGIILLALISLLSCLLPASEAKVYGRCELARVLHDFGLDGYRGYSLADWVCLAYFTSGFNTAAVDHEADGSTNNGIFQINSRRWCRNLTPNVPNVCQMYCS.

The Cytoplasmic segment spans residues 1 to 63 (MVSALREAPL…EARSRALRRR (63 aa)). The chain crosses the membrane as a helical; Signal-anchor for type II membrane protein span at residues 64–84 (WCPAGIILLALISLLSCLLPA). Over 85–167 (SEAKVYGRCE…VPNVCQMYCS (83 aa)) the chain is Extracellular. The 80-residue stretch at 88–167 (KVYGRCELAR…VPNVCQMYCS (80 aa)) folds into the C-type lysozyme domain. Cys151 and Cys166 are disulfide-bonded.

This sequence belongs to the glycosyl hydrolase 22 family. As to quaternary structure, interacts with ASTL. In terms of processing, the processed form derives from the membrane form by proteolytic processing.

The protein localises to the cytoplasmic vesicle. It localises to the secretory vesicle. It is found in the acrosome membrane. In terms of biological role, sperm surface membrane protein that may be involved in sperm-egg plasma membrane adhesion and fusion during fertilization. It could be a potential receptor for the egg oligosaccharide residue N-acetylglucosamine, which is present in the extracellular matrix over the egg plasma membrane. The processed form has no detectable bacteriolytic activity in vitro. This chain is Sperm acrosome membrane-associated protein 3 (SPACA3), found in Pongo pygmaeus (Bornean orangutan).